A 507-amino-acid chain; its full sequence is Cytochrome P450 4A14 (507 aa).

A propeptide spans 1-4 (removed in mature form); it reads MGFS. Glutamate 318 is a heme binding site. Position 437 is a phosphoserine (serine 437). Cysteine 454 lines the heme pocket.

The protein belongs to the cytochrome P450 family. It depends on heme as a cofactor.

It localises to the endoplasmic reticulum membrane. Its subcellular location is the microsome membrane. It carries out the reaction an omega-methyl-long-chain fatty acid + reduced [NADPH--hemoprotein reductase] + O2 = an omega-hydroxy-long-chain fatty acid + oxidized [NADPH--hemoprotein reductase] + H2O + H(+). The catalysed reaction is dodecanoate + reduced [NADPH--hemoprotein reductase] + O2 = (11R)-hydroxydodecanoate + oxidized [NADPH--hemoprotein reductase] + H2O + H(+). It catalyses the reaction dodecanoate + reduced [NADPH--hemoprotein reductase] + O2 = 12-hydroxydodecanoate + oxidized [NADPH--hemoprotein reductase] + H2O + H(+). The enzyme catalyses tetradecanoate + reduced [NADPH--hemoprotein reductase] + O2 = 14-hydroxytetradecanoate + oxidized [NADPH--hemoprotein reductase] + H2O + H(+). It functions in the pathway lipid metabolism; fatty acid metabolism. Functionally, a cytochrome P450 monooxygenase that catalyzes omega and omega-1 hydroxylation of saturated fatty acids. Exhibits preferential omega versus omega-1 regioselectivity and (R) versus (S) stereoselectivity for hydroxylation of dodecanoic (lauric) acid. Mechanistically, uses molecular oxygen inserting one oxygen atom into a substrate, and reducing the second into a water molecule, with two electrons provided by NADPH via cytochrome P450 reductase (CPR; NADPH-ferrihemoprotein reductase). This Rattus norvegicus (Rat) protein is Cytochrome P450 4A14.